Reading from the N-terminus, the 222-residue chain is U-scoloptoxin(11)-Sm5a (222 aa).

This sequence belongs to the scoloptoxin-11 family. Post-translationally, contains 8 disulfide bonds. Expressed by the venom gland.

The protein localises to the secreted. This is U-scoloptoxin(11)-Sm5a from Scolopendra morsitans (Tanzanian blue ringleg centipede).